A 336-amino-acid chain; its full sequence is Vacuolar protein sorting-associated protein 26B (336 aa).

Residues serine 302, serine 304, and serine 319 each carry the phosphoserine modification.

It belongs to the VPS26 family. In terms of assembly, component of the heterotrimeric retromer cargo-selective complex (CSC), also described as vacuolar protein sorting subcomplex (VPS), formed by VPS26 (VPS26A or VPS26B), VPS29 and VPS35. The CSC has a highly elongated structure with VPS26 and VPS29 binding independently at opposite distal ends of VPS35 as central platform. The CSC is believed to associate with variable sorting nexins to form functionally distinct retromer complex variants. The originally described SNX-BAR retromer is a pentamer containing the CSC and a heterodimeric membrane-deforming subcomplex formed between SNX1 or SNX2 and SNX5 or SNX6 (also called SNX-BAR subcomplex); the respective CSC and SNX-BAR subcomplexes associate with low affinity. The CSC associates with SNX3 to form a SNX3-retromer complex. The CSC associates with SNX27, the WASH complex and the SNX-BAR subcomplex to form the SNX27-retromer complex. Interacts with VPS29, VPS35, TBC1D5, GOLPH3, SNX27.

The protein localises to the cytoplasm. It is found in the membrane. Its subcellular location is the early endosome. The protein resides in the late endosome. Functionally, acts as a component of the retromer cargo-selective complex (CSC). The CSC is believed to be the core functional component of retromer or respective retromer complex variants acting to prevent missorting of selected transmembrane cargo proteins into the lysosomal degradation pathway. The recruitment of the CSC to the endosomal membrane involves RAB7A and SNX3. The SNX-BAR retromer mediates retrograde transport of cargo proteins from endosomes to the trans-Golgi network (TGN) and is involved in endosome-to-plasma membrane transport for cargo protein recycling. The SNX3-retromer mediates the retrograde transport of WLS distinct from the SNX-BAR retromer pathway. The SNX27-retromer is believed to be involved in endosome-to-plasma membrane trafficking and recycling of a broad spectrum of cargo proteins. The CSC seems to act as recruitment hub for other proteins, such as the WASH complex and TBC1D5. May be involved in retrograde transport of SORT1 but not of IGF2R. Acts redundantly with VSP26A in SNX-27 mediated endocytic recycling of SLC2A1/GLUT1. The protein is Vacuolar protein sorting-associated protein 26B (VPS26B) of Pongo abelii (Sumatran orangutan).